Here is a 417-residue protein sequence, read N- to C-terminus: Serine hydroxymethyltransferase 1 (417 aa).

Residues leucine 121 and 125–127 (GHL) each bind (6S)-5,6,7,8-tetrahydrofolate. An N6-(pyridoxal phosphate)lysine modification is found at lysine 229. 354–356 (SPF) contributes to the (6S)-5,6,7,8-tetrahydrofolate binding site.

It belongs to the SHMT family. In terms of assembly, homodimer. Pyridoxal 5'-phosphate is required as a cofactor.

It localises to the cytoplasm. The catalysed reaction is (6R)-5,10-methylene-5,6,7,8-tetrahydrofolate + glycine + H2O = (6S)-5,6,7,8-tetrahydrofolate + L-serine. It participates in one-carbon metabolism; tetrahydrofolate interconversion. The protein operates within amino-acid biosynthesis; glycine biosynthesis; glycine from L-serine: step 1/1. Catalyzes the reversible interconversion of serine and glycine with tetrahydrofolate (THF) serving as the one-carbon carrier. This reaction serves as the major source of one-carbon groups required for the biosynthesis of purines, thymidylate, methionine, and other important biomolecules. Also exhibits THF-independent aldolase activity toward beta-hydroxyamino acids, producing glycine and aldehydes, via a retro-aldol mechanism. The protein is Serine hydroxymethyltransferase 1 of Pseudomonas syringae pv. syringae (strain B728a).